A 387-amino-acid polypeptide reads, in one-letter code: Glutamate N-acetyltransferase (387 aa).

Thr140, Lys162, Thr173, Glu257, Asn382, and Thr387 together coordinate substrate. Thr173 (nucleophile) is an active-site residue.

The protein belongs to the ArgJ family. As to quaternary structure, heterotetramer of two alpha and two beta chains.

The protein resides in the cytoplasm. The enzyme catalyses N(2)-acetyl-L-ornithine + L-glutamate = N-acetyl-L-glutamate + L-ornithine. Its pathway is amino-acid biosynthesis; L-arginine biosynthesis; L-ornithine and N-acetyl-L-glutamate from L-glutamate and N(2)-acetyl-L-ornithine (cyclic): step 1/1. Catalyzes the transfer of the acetyl group from N(2)-acetylornithine to glutamate, forming N-acetylglutamate and L-ornithine. The polypeptide is Glutamate N-acetyltransferase (Methanopyrus kandleri (strain AV19 / DSM 6324 / JCM 9639 / NBRC 100938)).